A 363-amino-acid polypeptide reads, in one-letter code: G-protein coupled receptor 6 (363 aa).

Over 1-75 the chain is Extracellular; the sequence is MNASAAALNE…SGLLLSAVNP (75 aa). N-linked (GlcNAc...) asparagine glycans are attached at residues asparagine 2 and asparagine 9. The disordered stretch occupies residues 28 to 51; the sequence is AGTPDTSEWGPPAASAALGGGGGP. A glycan (N-linked (GlcNAc...) asparagine) is linked at asparagine 52. A helical transmembrane segment spans residues 76 to 95; the sequence is WDVLLCVSGTVIAGENALVV. The Cytoplasmic portion of the chain corresponds to 96 to 107; sequence ALIASTPALRTP. The helical transmembrane segment at 108-131 threads the bilayer; it reads MFVLVGSLATADLLAGCGLILHFV. The Extracellular portion of the chain corresponds to 132 to 143; it reads FQYVVPSETVSL. Residues 144–165 traverse the membrane as a helical segment; the sequence is LMVGFLVASFAASVSSLLAITV. The Cytoplasmic segment spans residues 166–186; it reads DRYLSLYNALTYYSRRTLLGV. The helical transmembrane segment at 187–206 threads the bilayer; that stretch reads HLLLAATWTVSLGLGLLPVL. Over 207 to 231 the chain is Extracellular; sequence GWNCLADRASCSVVRPLTRSHVALL. Residues 232–250 traverse the membrane as a helical segment; sequence STSFFVVFGIMLHLYVRIC. Residues 251–278 are Cytoplasmic-facing; sequence QVVWRHAHQIALQQHCLAPPHLAATRKG. The helical transmembrane segment at 279–305 threads the bilayer; it reads VGTLAVVLGTFGASWLPFAIYCVVGSQ. The Extracellular segment spans residues 306–310; the sequence is EDPAI. Residues 311–332 traverse the membrane as a helical segment; sequence YTYATLLPATYNSMINPIIYAF. Topologically, residues 333-363 are cytoplasmic; that stretch reads RNQEIQRALWLLFCGCFQSKVPFRSRSPSEV. Cysteine 346 carries S-palmitoyl cysteine lipidation. 3 positions are modified to phosphoserine: serine 357, serine 359, and serine 361.

The protein belongs to the G-protein coupled receptor 1 family. Expressed in the brain, with a prominent distribution in striatum.

Its subcellular location is the cell membrane. Its function is as follows. Orphan receptor with constitutive G(s) signaling activity that activate cyclic AMP. Promotes neurite outgrowth and blocks myelin inhibition in neurons. This is G-protein coupled receptor 6 (Gpr6) from Rattus norvegicus (Rat).